Consider the following 130-residue polypeptide: Small ribosomal subunit protein uS9 (130 aa).

Belongs to the universal ribosomal protein uS9 family.

The polypeptide is Small ribosomal subunit protein uS9 (Exiguobacterium sp. (strain ATCC BAA-1283 / AT1b)).